The primary structure comprises 423 residues: Glucose-1-phosphate adenylyltransferase (423 aa).

Alpha-D-glucose 1-phosphate contacts are provided by residues Tyr108, Gly173, 188 to 189 (EK), and Ser207.

Belongs to the bacterial/plant glucose-1-phosphate adenylyltransferase family. As to quaternary structure, homotetramer.

It catalyses the reaction alpha-D-glucose 1-phosphate + ATP + H(+) = ADP-alpha-D-glucose + diphosphate. The protein operates within glycan biosynthesis; glycogen biosynthesis. Involved in the biosynthesis of ADP-glucose, a building block required for the elongation reactions to produce glycogen. Catalyzes the reaction between ATP and alpha-D-glucose 1-phosphate (G1P) to produce pyrophosphate and ADP-Glc. The polypeptide is Glucose-1-phosphate adenylyltransferase (Francisella tularensis subsp. novicida (strain U112)).